The chain runs to 348 residues: Holliday junction branch migration complex subunit RuvB (348 aa).

Residues 4–198 (TTDYGASNTG…FGFTAHLDFY (195 aa)) are large ATPase domain (RuvB-L). ATP is bound by residues leucine 37, arginine 38, glycine 79, lysine 82, threonine 83, threonine 84, 145-147 (EDF), arginine 188, tyrosine 198, and arginine 235. A Mg(2+)-binding site is contributed by threonine 83. The small ATPAse domain (RuvB-S) stretch occupies residues 199 to 269 (PHEELEKLIE…DVKEALALYQ (71 aa)). The head domain (RuvB-H) stretch occupies residues 272–348 (SEGLDRLDIA…DIIFGNYAQR (77 aa)). Arginine 327 and arginine 332 together coordinate DNA.

It belongs to the RuvB family. In terms of assembly, homohexamer. Forms an RuvA(8)-RuvB(12)-Holliday junction (HJ) complex. HJ DNA is sandwiched between 2 RuvA tetramers; dsDNA enters through RuvA and exits via RuvB. An RuvB hexamer assembles on each DNA strand where it exits the tetramer. Each RuvB hexamer is contacted by two RuvA subunits (via domain III) on 2 adjacent RuvB subunits; this complex drives branch migration. In the full resolvosome a probable DNA-RuvA(4)-RuvB(12)-RuvC(2) complex forms which resolves the HJ.

The protein resides in the cytoplasm. The catalysed reaction is ATP + H2O = ADP + phosphate + H(+). Its function is as follows. The RuvA-RuvB-RuvC complex processes Holliday junction (HJ) DNA during genetic recombination and DNA repair, while the RuvA-RuvB complex plays an important role in the rescue of blocked DNA replication forks via replication fork reversal (RFR). RuvA specifically binds to HJ cruciform DNA, conferring on it an open structure. The RuvB hexamer acts as an ATP-dependent pump, pulling dsDNA into and through the RuvAB complex. RuvB forms 2 homohexamers on either side of HJ DNA bound by 1 or 2 RuvA tetramers; 4 subunits per hexamer contact DNA at a time. Coordinated motions by a converter formed by DNA-disengaged RuvB subunits stimulates ATP hydrolysis and nucleotide exchange. Immobilization of the converter enables RuvB to convert the ATP-contained energy into a lever motion, pulling 2 nucleotides of DNA out of the RuvA tetramer per ATP hydrolyzed, thus driving DNA branch migration. The RuvB motors rotate together with the DNA substrate, which together with the progressing nucleotide cycle form the mechanistic basis for DNA recombination by continuous HJ branch migration. Branch migration allows RuvC to scan DNA until it finds its consensus sequence, where it cleaves and resolves cruciform DNA. In Bifidobacterium longum (strain DJO10A), this protein is Holliday junction branch migration complex subunit RuvB.